Here is a 642-residue protein sequence, read N- to C-terminus: Chaperone protein HtpG (642 aa).

The segment at 1 to 348 (MSTKIEQLEF…AQDLSLNVSR (348 aa)) is a; substrate-binding. Residues 349-564 (EILQQDRQIR…AFSMSPALER (216 aa)) are b. The segment at 565 to 642 (MYRASGQPVP…MLANRLARTV (78 aa)) is c.

It belongs to the heat shock protein 90 family. Homodimer.

Its subcellular location is the cytoplasm. In terms of biological role, molecular chaperone. Has ATPase activity. The chain is Chaperone protein HtpG from Rhodococcus jostii (strain RHA1).